A 531-amino-acid polypeptide reads, in one-letter code: Probable peptide ABC transporter periplasmic-binding protein y4tO (531 aa).

The tat-type signal signal peptide spans 1–32; the sequence is MTISRRDLFKAGLAAGAALSVPSLLRAQTAVA.

The protein belongs to the bacterial solute-binding protein 5 family. In terms of processing, predicted to be exported by the Tat system. The position of the signal peptide cleavage has not been experimentally proven.

Its subcellular location is the periplasm. Functionally, probably part of the binding-protein-dependent transport system y4tOPQRS for a peptide. This is Probable peptide ABC transporter periplasmic-binding protein y4tO from Sinorhizobium fredii (strain NBRC 101917 / NGR234).